The chain runs to 518 residues: Histone deacetylase 1 (518 aa).

Residues 22-333 (RRVCYFYDAE…WCYETGVALG (312 aa)) are histone deacetylase. Histidine 153 serves as the catalytic Proton donor/acceptor. Aspartate 188, histidine 190, and aspartate 276 together coordinate Zn(2+). The interval 387 to 518 (HAPSVQFQER…QDQPSVHQKT (132 aa)) is disordered. Residues 401 to 412 (ELPEQDEDQEDP) show a composition bias toward acidic residues. Residues 413–435 (DERHHADSDVEMDDVKPLDDSGR) are compositionally biased toward basic and acidic residues. The span at 503 to 518 (DNSNKLQDQPSVHQKT) shows a compositional bias: polar residues.

Belongs to the histone deacetylase family. HD Type 1 subfamily. As to quaternary structure, interacts with TPR3. Zn(2+) serves as cofactor. Expressed in roots and leaves.

The protein localises to the nucleus. It catalyses the reaction N(6)-acetyl-L-lysyl-[histone] + H2O = L-lysyl-[histone] + acetate. Its function is as follows. Responsible for the deacetylation of lysine residues on the N-terminal part of the core histones (H2A, H2B, H3 and H4). Histone deacetylation gives a tag for epigenetic repression and plays an important role in transcriptional regulation, cell cycle progression and developmental events. Histone deacetylases act via the formation of large multiprotein complexes. Negatively regulates the expression of the NAC48/NAC6 gene that controls root growth in seedlings. Epigenetically represses the expression of NAC48/NAC6 by deacetylating 'Lys-9' (H3K9ac), 'Lys-14' (H3K14ac) and 'Lys-18' (H3K18ac) of histone H3, and 'Lys-5' (H4K5ac), 'Lys-12' (H4K12ac) and 'Lys-16' (H4K16ac) of histone H4. Functions in the regulation of gene expression in the whole genome. Acts as a chromatin remodeling regulator to promote the formation of a repressive chromatin state. Functions with MODD via its interaction with TPR3, to down-regulates the histone acetylation level at BZIP46 target genes. BZIP46 is a positive regulator of abscisic acid (ABA) signaling and drought stress tolerance. This is Histone deacetylase 1 from Oryza sativa subsp. japonica (Rice).